The primary structure comprises 460 residues: Antizyme inhibitor 2 (460 aa).

Residues 117-140 (QIAQIKYAAKHGIQLLSFDNEMEL) form a necessary for polyamine uptake stimulation region.

It belongs to the Orn/Lys/Arg decarboxylase class-II family. ODC antizyme inhibitor subfamily. In terms of assembly, monomer. Interacts with OAZ1, OAZ2 and OAZ3; this interaction disrupts the interaction between the antizyme and ODC1. Does not form a heterodimer with ODC1. Ubiquitinated, leading to its proteasomal degradation; a process that is reduced in presence of antizymes. May also be degraded through the lysosomal degradative pathway in a proteasomal-independent manner. In terms of tissue distribution, expressed in the neocortex, thalamus, hippocampus, cerebellum, medulla oblongata, gray and white matter. Expressed in neurons, oligodendrocytes, basket, Purkinje and pyramidal cells. Expressed in spermatocytes and Leydig cells of the testis. Expressed in luteal theca cells lining corpus luteum cysts and in hilus cells of the ovary. Expressed in primary and neoplastic mast cells (MC) (at protein level). Highly expressed in brain. Also expressed in testis.

The protein localises to the nucleus. The protein resides in the cytoplasm. It is found in the perinuclear region. Its subcellular location is the membrane. It localises to the cytoplasmic vesicle. The protein localises to the endoplasmic reticulum-Golgi intermediate compartment. The protein resides in the golgi apparatus. It is found in the cis-Golgi network. Its subcellular location is the trans-Golgi network. It localises to the cytoplasmic granule. The protein localises to the cell projection. The protein resides in the axon. It is found in the dendrite. Its subcellular location is the perikaryon. Antizyme inhibitor (AZI) protein that positively regulates ornithine decarboxylase (ODC) activity and polyamine uptake. AZI is an enzymatically inactive ODC homolog that counteracts the negative effect of ODC antizymes (AZs) OAZ1, OAZ2 and OAZ3 on ODC activity by competing with ODC for antizyme-binding. Inhibits antizyme-dependent ODC degradation and releases ODC monomers from their inactive complex with antizymes, leading to formation of the catalytically active ODC homodimer and restoring polyamine production. Participates in the morphological integrity of the trans-Golgi network (TGN) and functions as a regulator of intracellular secretory vesicle trafficking. The polypeptide is Antizyme inhibitor 2 (AZIN2) (Homo sapiens (Human)).